Consider the following 93-residue polypeptide: Putative pterin-4-alpha-carbinolamine dehydratase (93 aa).

It belongs to the pterin-4-alpha-carbinolamine dehydratase family.

It carries out the reaction (4aS,6R)-4a-hydroxy-L-erythro-5,6,7,8-tetrahydrobiopterin = (6R)-L-erythro-6,7-dihydrobiopterin + H2O. The sequence is that of Putative pterin-4-alpha-carbinolamine dehydratase from Mycolicibacterium vanbaalenii (strain DSM 7251 / JCM 13017 / BCRC 16820 / KCTC 9966 / NRRL B-24157 / PYR-1) (Mycobacterium vanbaalenii).